A 549-amino-acid chain; its full sequence is Frizzled-7-A (549 aa).

The first 22 residues, 1-22, serve as a signal peptide directing secretion; sequence MSSTVSLLFCCLFLQLCPSAQQ. At 23-231 the chain is on the extracellular side; the sequence is YHGEKGISVP…EEEVRFARLW (209 aa). The FZ domain occupies 32 to 151; sequence PDHGFCQPIS…HGAGEICVGQ (120 aa). Disulfide bonds link cysteine 37/cysteine 98, cysteine 45/cysteine 91, cysteine 82/cysteine 119, cysteine 108/cysteine 148, and cysteine 112/cysteine 136. The N-linked (GlcNAc...) asparagine glycan is linked to asparagine 51. Residue asparagine 152 is glycosylated (N-linked (GlcNAc...) asparagine). Residues 232 to 252 form a helical membrane-spanning segment; the sequence is VGIWAILCCISTLFTVLTYLV. Topologically, residues 253–263 are cytoplasmic; that stretch reads DMRRFSYPERP. The chain crosses the membrane as a helical span at residues 264–284; it reads IIFLSGCYFMVAVAYTAGFLL. At 285-311 the chain is on the extracellular side; sequence EERAVCVERFSEDSYRTVAQGTKKEGC. Residues 312-332 traverse the membrane as a helical segment; that stretch reads TILFMILYFFGMASSIWWVIL. Residues 333–354 are Cytoplasmic-facing; that stretch reads SLTWFLSAGMKWGHEAIEANSQ. Residues 355 to 375 traverse the membrane as a helical segment; that stretch reads YFHLAAWAVPAVKTITILAMG. Over 376–398 the chain is Extracellular; the sequence is QVDGDVLSGVCYVGINSVDSLRG. The chain crosses the membrane as a helical span at residues 399 to 419; it reads FVLAPLFVYLFIGTSFLLAGF. Topologically, residues 420-445 are cytoplasmic; the sequence is VSLFRIRTIMKHDGTKTEKLEKLMVR. A helical membrane pass occupies residues 446-466; the sequence is IGVFSVMYTVPATIVLACYFY. The Extracellular segment spans residues 467–503; the sequence is EQAFRDTWEKTWLVQTCKGYAVPCPNYNFAPMSPDFT. The chain crosses the membrane as a helical span at residues 504–524; it reads VFMIKYLMTMIVGITSSFWIW. Over 525 to 549 the chain is Cytoplasmic; that stretch reads SGKTLQSWRRFYHRLSNGSKGETAV. The short motif at 527–532 is the Lys-Thr-X-X-X-Trp motif, mediates interaction with the PDZ domain of Dvl family members element; that stretch reads KTLQSW. Residues 547 to 549 carry the PDZ-binding motif; sequence TAV.

It belongs to the G-protein coupled receptor Fz/Smo family. In terms of assembly, interacts with wnt11 and sdc4. The extracellular domain interacts with the extracellular domain of pcdh8/papc. As to expression, expressed in the animal region of cleavage stage embryos. During gastrulation, broadly expressed on the dorsal side of the embryo in deep mesodermal cells surrounding the blastopore lip and in presumptive anterior neuroectoderm. During neurulation, becomes progressively more restricted to the dorsal epidermis, neural plate, and neural tube. Expressed in the cranial neural crest of neurulae and tailbud embryos as well as the pronephros of tailbud embryos. Localized to the brain of neurulae, tailbud embryos and tadpoles. In tadpoles, strongly expressed in the eye and developing heart.

It localises to the cell membrane. It is found in the endosome membrane. Receptor for Wnt proteins. Acts in both canonical and non-canonical Wnt pathways. Although different papers report differing Wnt preferences, wnt5a, wnt8b and wnt11 have been proposed as synergists. In the canonical Wnt pathway, acts via beta-catenin to promote the expression of the dorsal genes siamois, twin and nodal3 and to establish the dorsal axis of the embryo and induce dorsal mesoderm formation. In a non-canonical Wnt/planar cell polarity (PCP) pathway, acts with sdc4 and dvl2/dsh to regulate convergent extension cell movements during gastrulation. Triggers phosphorylation of dvl2/dsh and its translocation to the plasma membrane. In a third branch of Wnt signaling, acts in a non-canonical pathway via trimeric G proteins, and independently of dvl2/dsh, to recruit protein kinase C (PKC) to the membrane and thus activate PKC. PKC signaling controls cell sorting and tissue separation during gastrulation. This chain is Frizzled-7-A (fzd7-a), found in Xenopus laevis (African clawed frog).